The chain runs to 71 residues: Sec-independent protein translocase protein TatA (71 aa).

A helical membrane pass occupies residues 1 to 21 (MGASPVQLLIVLFIAVLVFGG).

Belongs to the TatA/E family. The Tat system comprises two distinct complexes: a TatABC complex, containing multiple copies of TatA, TatB and TatC subunits, and a separate TatA complex, containing only TatA subunits. Substrates initially bind to the TatABC complex, which probably triggers association of the separate TatA complex to form the active translocon.

It is found in the cell inner membrane. In terms of biological role, part of the twin-arginine translocation (Tat) system that transports large folded proteins containing a characteristic twin-arginine motif in their signal peptide across membranes. TatA could form the protein-conducting channel of the Tat system. In Dichelobacter nodosus (strain VCS1703A), this protein is Sec-independent protein translocase protein TatA.